A 3583-amino-acid polypeptide reads, in one-letter code: Surfactin synthase subunit 2 (3583 aa).

3 consecutive Carrier domains span residues 965 to 1039, 2005 to 2080, and 3034 to 3108; these read APKT…EENE, APET…EASA, and APTT…ERAE. An O-(pantetheine 4'-phosphoryl)serine mark is found at Ser-999, Ser-2040, and Ser-3069.

It belongs to the ATP-dependent AMP-binding enzyme family. The cofactor is pantetheine 4'-phosphate.

Its pathway is antibiotic biosynthesis; surfactin biosynthesis. This protein is a multifunctional enzyme able to activate and polymerize the amino acids Leu, Glu, Asp and Val. Activation sites for these AA consist of individual domains. This Bacillus subtilis (strain 168) protein is Surfactin synthase subunit 2 (srfAB).